A 284-amino-acid chain; its full sequence is Sulfotransferase 2A1 (284 aa).

The 3'-phosphoadenylyl sulfate site is built by K43, S44, G45, T46, N47, and W48. The active-site Proton acceptor is the H98. Residues R120, S128, Y183, S217, M222, R246, K247, and G248 each contribute to the 3'-phosphoadenylyl sulfate site.

The protein belongs to the sulfotransferase 1 family. Homodimer.

The protein localises to the cytoplasm. The enzyme catalyses an alcohol + 3'-phosphoadenylyl sulfate = an alkyl sulfate + adenosine 3',5'-bisphosphate + H(+). It catalyses the reaction taurolithocholate + 3'-phosphoadenylyl sulfate = taurolithocholate 3-sulfate + adenosine 3',5'-bisphosphate + H(+). The catalysed reaction is lithocholate + 3'-phosphoadenylyl sulfate = lithocholate sulfate + adenosine 3',5'-bisphosphate + H(+). It carries out the reaction (24S)-hydroxycholesterol + 3'-phosphoadenylyl sulfate = (24S)-hydroxycholesterol 24-sulfate + adenosine 3',5'-bisphosphate + H(+). The enzyme catalyses (24S)-hydroxycholesterol + 3'-phosphoadenylyl sulfate = (24S)-hydroxycholesterol 3-sulfate + adenosine 3',5'-bisphosphate + H(+). It catalyses the reaction (24S)-hydroxycholesterol 24-sulfate + 3'-phosphoadenylyl sulfate = (24S)-hydroxycholesterol 3,24-disulfate + adenosine 3',5'-bisphosphate + H(+). The catalysed reaction is 3beta-hydroxyandrost-5-en-17-one + 3'-phosphoadenylyl sulfate = dehydroepiandrosterone 3-sulfate + adenosine 3',5'-bisphosphate + H(+). It carries out the reaction pregnenolone + 3'-phosphoadenylyl sulfate = pregnenolone sulfate + adenosine 3',5'-bisphosphate + H(+). The enzyme catalyses androsterone + 3'-phosphoadenylyl sulfate = androsterone 3alpha-sulfate + adenosine 3',5'-bisphosphate + H(+). In terms of biological role, sulfotransferase that utilizes 3'-phospho-5'-adenylyl sulfate (PAPS) as sulfonate donor to catalyze the sulfonation of steroids and bile acids in the liver and adrenal glands. Mediates the sulfation of a wide range of steroids and sterols, including pregnenolone, androsterone, DHEA, bile acids, cholesterol and as well many xenobiotics that contain alcohol and phenol functional groups. Sulfonation increases the water solubility of most compounds, and therefore their renal excretion, but it can also result in bioactivation to form active metabolites. Plays an important role in maintening steroid and lipid homeostasis. Plays a key role in bile acid metabolism. In addition, catalyzes the metabolic activation of potent carcinogenic polycyclic arylmethanols. This chain is Sulfotransferase 2A1 (Sult2a1), found in Rattus norvegicus (Rat).